Reading from the N-terminus, the 227-residue chain is ATP synthase F(0) complex subunit a (227 aa).

6 helical membrane-spanning segments follow: residues 14–34 (LLGIPLIAMAIMIPWLIFPTP), 69–89 (WATILTALMLFLITINLLGLL), 99–119 (LSLNMAFAIPLWLTTVLIGML), 137–157 (LLIPILIIIETISLFIRPLAL), 180–200 (FVLITIMPTVALLTSLILFLL), and 202–222 (ILEVAVAMIQAYVFVLLLSLY).

This sequence belongs to the ATPase A chain family. Component of the ATP synthase complex composed at least of ATP5F1A/subunit alpha, ATP5F1B/subunit beta, ATP5MC1/subunit c (homooctomer), MT-ATP6/subunit a, MT-ATP8/subunit 8, ATP5ME/subunit e, ATP5MF/subunit f, ATP5MG/subunit g, ATP5MK/subunit k, ATP5MJ/subunit j, ATP5F1C/subunit gamma, ATP5F1D/subunit delta, ATP5F1E/subunit epsilon, ATP5PF/subunit F6, ATP5PB/subunit b, ATP5PD/subunit d, ATP5PO/subunit OSCP. ATP synthase complex consists of a soluble F(1) head domain (subunits alpha(3) and beta(3)) - the catalytic core - and a membrane F(0) domain - the membrane proton channel (subunits c, a, 8, e, f, g, k and j). These two domains are linked by a central stalk (subunits gamma, delta, and epsilon) rotating inside the F1 region and a stationary peripheral stalk (subunits F6, b, d, and OSCP). Interacts with DNAJC30; interaction is direct.

Its subcellular location is the mitochondrion inner membrane. The catalysed reaction is H(+)(in) = H(+)(out). Functionally, subunit a, of the mitochondrial membrane ATP synthase complex (F(1)F(0) ATP synthase or Complex V) that produces ATP from ADP in the presence of a proton gradient across the membrane which is generated by electron transport complexes of the respiratory chain. ATP synthase complex consist of a soluble F(1) head domain - the catalytic core - and a membrane F(1) domain - the membrane proton channel. These two domains are linked by a central stalk rotating inside the F(1) region and a stationary peripheral stalk. During catalysis, ATP synthesis in the catalytic domain of F(1) is coupled via a rotary mechanism of the central stalk subunits to proton translocation. With the subunit c (ATP5MC1), forms the proton-conducting channel in the F(0) domain, that contains two crucial half-channels (inlet and outlet) that facilitate proton movement from the mitochondrial intermembrane space (IMS) into the matrix. Protons are taken up via the inlet half-channel and released through the outlet half-channel, following a Grotthuss mechanism. This Squalus acanthias (Spiny dogfish) protein is ATP synthase F(0) complex subunit a.